A 106-amino-acid chain; its full sequence is COX assembly mitochondrial protein homolog (106 aa).

A2 bears the N-acetylalanine mark. Residues 28-71 form the CHCH domain; that stretch reads RERCSEQVEDFTRCCKDSGILMVLKCRKENSALKDCLTAYYNDP. Short sequence motifs (cx9C motif) lie at residues 31–41 and 53–63; these read CSEQVEDFTRC and CRKENSALKDC. Intrachain disulfides connect C31–C63 and C41–C53.

The protein belongs to the CMC family. Component of the MITRAC (mitochondrial translation regulation assembly intermediate of cytochrome c oxidase complex) complex, the core components of this complex being COA3/MITRAC12 and COX14.

Its subcellular location is the mitochondrion. Functionally, component of the MITRAC (mitochondrial translation regulation assembly intermediate of cytochrome c oxidase complex) complex, that regulates cytochrome c oxidase assembly. The protein is COX assembly mitochondrial protein homolog (Cmc1) of Mus musculus (Mouse).